Here is a 424-residue protein sequence, read N- to C-terminus: Mitogen-activated protein kinase 9 (424 aa).

The Protein kinase domain occupies 26 to 321 (YQQLKPIGSG…VDEALRHPYI (296 aa)). Residues 32–40 (IGSGAQGIV) and Lys55 each bind ATP. Asp151 serves as the catalytic Proton acceptor. A Phosphothreonine; by MAP2K7 modification is found at Thr183. The short motif at 183 to 185 (TPY) is the TXY element. At Tyr185 the chain carries Phosphotyrosine; by MAP2K4. A disordered region spans residues 368–424 (KNGVVKDQPSDAAVSSNATPSQSSSINDISSMSTEQTLASDTDSSLDASTGPLEGCR). Residues 388 to 417 (SQSSSINDISSMSTEQTLASDTDSSLDAST) show a composition bias toward low complexity.

The protein belongs to the protein kinase superfamily. CMGC Ser/Thr protein kinase family. MAP kinase subfamily. As to quaternary structure, interacts with MECOM. Interacts with DCLK2. Binds to at least four scaffolding proteins, MAPK8IP1/JIP-1, MAPK8IP2/JIP-2, MAPK8IP3/JIP-3/JSAP1 and SPAG9/MAPK8IP4/JIP-4. These proteins also bind other components of the JNK signaling pathway. Interacts with NFATC4. Interacts with ATF7; the interaction does not phosphorylate ATF7 but acts as a docking site for ATF7-associated partners such as JUN. Interacts with BCL10. Interacts with CTNNB1 and GSK3B. Interacts with MAPKBP1. Interacts with POU5F1; phosphorylates POU5F1 at 'Ser-355'. Found in a complex with SH3RF1, RAC2, MAP3K7/TAK1, MAP2K7/MKK7, MAPK8IP1/JIP1 and MAPK8/JNK1. Mg(2+) serves as cofactor. Dually phosphorylated on Thr-183 and Tyr-185 by MAP2K7 and MAP2K4, which activates the enzyme. Autophosphorylated in vitro.

Its subcellular location is the cytoplasm. It localises to the nucleus. The catalysed reaction is L-seryl-[protein] + ATP = O-phospho-L-seryl-[protein] + ADP + H(+). It catalyses the reaction L-threonyl-[protein] + ATP = O-phospho-L-threonyl-[protein] + ADP + H(+). Its activity is regulated as follows. Activated by threonine and tyrosine phosphorylation by either of two dual specificity kinases, MAP2K4 and MAP2K7. MAP2K4 shows a strong preference for Tyr-185 while MAP2K7 phosphorylates Tyr-183 preferentially. Inhibited by dual specificity phosphatases, such as DUSP1. In terms of biological role, serine/threonine-protein kinase involved in various processes such as cell proliferation, differentiation, migration, transformation and programmed cell death. Extracellular stimuli such as pro-inflammatory cytokines or physical stress stimulate the stress-activated protein kinase/c-Jun N-terminal kinase (SAP/JNK) signaling pathway. In this cascade, two dual specificity kinases MAP2K4/MKK4 and MAP2K7/MKK7 phosphorylate and activate MAPK9/JNK2. In turn, MAPK9/JNK2 phosphorylates a number of transcription factors, primarily components of AP-1 such as JUN and ATF2 and thus regulates AP-1 transcriptional activity. In response to oxidative or ribotoxic stresses, inhibits rRNA synthesis by phosphorylating and inactivating the RNA polymerase 1-specific transcription initiation factor RRN3. Promotes stressed cell apoptosis by phosphorylating key regulatory factors including TP53 and YAP1. In T-cells, MAPK8 and MAPK9 are required for polarized differentiation of T-helper cells into Th1 cells. Upon T-cell receptor (TCR) stimulation, is activated by CARMA1, BCL10, MAP2K7 and MAP3K7/TAK1 to regulate JUN protein levels. Plays an important role in the osmotic stress-induced epithelial tight-junctions disruption. When activated, promotes beta-catenin/CTNNB1 degradation and inhibits the canonical Wnt signaling pathway. Also participates in neurite growth in spiral ganglion neurons. Phosphorylates the CLOCK-BMAL1 heterodimer and plays a role in the regulation of the circadian clock. Phosphorylates POU5F1, which results in the inhibition of POU5F1's transcriptional activity and enhances its proteasomal degradation. Phosphorylates ALKBH5 in response to reactive oxygen species (ROS), promoting ALKBH5 sumoylation and inactivation. MAPK9 isoforms display different binding patterns: alpha-1 and alpha-2 preferentially bind to JUN, whereas beta-1 and beta-2 bind to ATF2. However, there is no correlation between binding and phosphorylation, which is achieved at about the same efficiency by all isoforms. JUNB is not a substrate for JNK2 alpha-2, and JUND binds only weakly to it. The protein is Mitogen-activated protein kinase 9 (MAPK9) of Homo sapiens (Human).